A 723-amino-acid chain; its full sequence is BBSome complex assembly protein BBS10 (723 aa).

It belongs to the TCP-1 chaperonin family. In terms of assembly, component of a complex composed at least of MKKS, BBS10, BBS12, TCP1, CCT2, CCT3, CCT4, CCT5 and CCT8.

Its subcellular location is the cell projection. It is found in the cilium. In terms of biological role, probable molecular chaperone that assists the folding of proteins upon ATP hydrolysis. Plays a role in the assembly of BBSome, a complex involved in ciliogenesis regulating transports vesicles to the cilia. Involved in adipogenic differentiation. The sequence is that of BBSome complex assembly protein BBS10 (BBS10) from Pongo abelii (Sumatran orangutan).